Consider the following 652-residue polypeptide: Beta-glucuronidase (652 aa).

Positions 1 to 22 (MVRGPAGAWAVLGPLLWGCGLA) are cleaved as a signal peptide. Residues Asn-173 and Asn-420 are each glycosylated (N-linked (GlcNAc...) asparagine). The active-site Proton donor is the Glu-451. Asn-631 carries an N-linked (GlcNAc...) asparagine glycan.

It belongs to the glycosyl hydrolase 2 family. As to quaternary structure, homotetramer.

The protein localises to the lysosome. It catalyses the reaction a beta-D-glucuronoside + H2O = D-glucuronate + an alcohol. Its activity is regulated as follows. Inhibited by L-aspartic acid. In terms of biological role, plays an important role in the degradation of dermatan and keratan sulfates. The polypeptide is Beta-glucuronidase (GUSB) (Sus scrofa (Pig)).